The primary structure comprises 296 residues: Arginine/serine-rich protein 1 (296 aa).

The tract at residues M1–S131 is disordered. S12 is modified (phosphoserine). Residues S20–S31 show a composition bias toward low complexity. A compositionally biased stretch (basic residues) spans S32–S125. S111 and S113 each carry phosphoserine. The residue at position 141 (R141) is an Omega-N-methylarginine. The span at E156–R165 shows a compositional bias: basic and acidic residues. Disordered stretches follow at residues E156–R175 and S217–V296. Residues E245–V261 show a composition bias toward polar residues. Basic and acidic residues predominate over residues A272–K287. Residue S280 is modified to Phosphoserine.

This sequence belongs to the RSRP family. Phosphorylated. Phosphorylation at Ser-111 and Ser-113 mediates the interaction with spliceosome proteins.

Its subcellular location is the nucleus. Probably acts as a spliceosomal factor that contributes to spliceosome assembly and regulates the isoform switching of proteins such as PARP6. In Macaca fascicularis (Crab-eating macaque), this protein is Arginine/serine-rich protein 1 (RSRP1).